Reading from the N-terminus, the 482-residue chain is UDP-glucose 6-dehydrogenase 2 (482 aa).

NAD(+)-binding positions include 8–13 (GAGYVG), Asp-33, Arg-38, 86–90 (VNTPT), 127–128 (ST), and Glu-163. Residues 159-163 (EFLAE), 218-225 (KLAANAFL), and 258-271 (RIGP…VGFG) each bind substrate. Catalysis depends on Cys-274, which acts as the Nucleophile. 274 to 277 (CFQK) provides a ligand contact to NAD(+). 336–337 (FK) contributes to the substrate binding site. Residue Arg-344 coordinates NAD(+). Ser-395 is subject to Phosphoserine. Residue Arg-449 coordinates substrate.

It belongs to the UDP-glucose/GDP-mannose dehydrogenase family.

It carries out the reaction UDP-alpha-D-glucose + 2 NAD(+) + H2O = UDP-alpha-D-glucuronate + 2 NADH + 3 H(+). It functions in the pathway nucleotide-sugar biosynthesis; UDP-alpha-D-glucuronate biosynthesis; UDP-alpha-D-glucuronate from UDP-alpha-D-glucose: step 1/1. Its function is as follows. Involved in the biosynthesis of UDP-glucuronic acid (UDP-GlcA), providing nucleotide sugars for cell-wall polymers. The sequence is that of UDP-glucose 6-dehydrogenase 2 (UGD2) from Oryza sativa subsp. japonica (Rice).